The following is a 142-amino-acid chain: Large ribosomal subunit protein uL13 (142 aa).

This sequence belongs to the universal ribosomal protein uL13 family. In terms of assembly, part of the 50S ribosomal subunit.

Its function is as follows. This protein is one of the early assembly proteins of the 50S ribosomal subunit, although it is not seen to bind rRNA by itself. It is important during the early stages of 50S assembly. In Opitutus terrae (strain DSM 11246 / JCM 15787 / PB90-1), this protein is Large ribosomal subunit protein uL13.